Reading from the N-terminus, the 554-residue chain is Endochitinase (554 aa).

Residues 1 to 19 (MRATLATLAVLALATAVQS) form the signal peptide. The 376-residue stretch at 23-398 (ARIVCYFSNW…KILHKHMSSY (376 aa)) folds into the GH18 domain. The cysteines at positions 27 and 52 are disulfide-linked. 76 to 77 (LD) provides a ligand contact to chitin. The N-linked (GlcNAc...) asparagine glycan is linked to asparagine 85. 103–106 (GGWA) lines the chitin pocket. Glutamate 146 functions as the Proton donor in the catalytic mechanism. Chitin contacts are provided by residues tyrosine 147 and 213 to 216 (MSYD). Asparagine 303 carries an N-linked (GlcNAc...) asparagine glycan. Tryptophan 370 serves as a coordination point for chitin. Residues 398–494 (YTVPPPHTEN…VPPTENEVDG (97 aa)) form a disordered region. Over residues 431 to 457 (PTTTTAKPASTTKTTVKTTTTTTAKPP) the composition is skewed to low complexity. The span at 467–477 (INVRPEPKPEP) shows a compositional bias: basic and acidic residues. The Chitin-binding type-2 domain maps to 495 to 553 (SEICNSDQDYIPDKKHCDKYWRCVNGEAMQFSCQHGTVFNVELNVCDWPSNATRRECQQ). A disulfide bridge connects residues cysteine 527 and cysteine 540. N-linked (GlcNAc...) asparagine glycosylation is present at asparagine 545.

This sequence belongs to the glycosyl hydrolase 18 family. Chitinase class II subfamily. Epidermis and gut.

It is found in the secreted. It carries out the reaction Random endo-hydrolysis of N-acetyl-beta-D-glucosaminide (1-&gt;4)-beta-linkages in chitin and chitodextrins.. In terms of biological role, digests chitin in the exoskeleton during the molting process. The polypeptide is Endochitinase (Manduca sexta (Tobacco hawkmoth)).